The following is a 260-amino-acid chain: RxLR effector protein BLR38 (260 aa).

The first 18 residues, 1–18 (MHCTVFFLLIACAKSSYG), serve as a signal peptide directing secretion. Residues 46 to 49 (RLLR) carry the RxLR motif. A Nuclear localuization signal (NLS) motif is present at residues 136–148 (MPSSRKRPRALDE).

Belongs to the RxLR effector family.

The protein resides in the secreted. It localises to the host nucleus. In terms of biological role, secreted effector that triggers a robust hypersensitive response (HR) in Lactuca serriola LS102. The response to BLN06 was visible as strong necrosis. Although effector recognition is frequently associated with single dominant R gene loci, the recognition of BLR38 requires 2 unlinked loci that display incomplete dominance. The sequence is that of RxLR effector protein BLR38 from Bremia lactucae (Lettuce downy mildew).